Reading from the N-terminus, the 312-residue chain is Molybdenum cofactor biosynthesis bifunctional protein (312 aa).

The segment at 1-155 (MEFTHLDENG…GGKSSAAEYH (155 aa)) is molybdenum cofactor biosynthesis protein C. Substrate contacts are provided by residues 74-76 (LCH) and 110-111 (ME). Residue aspartate 125 is part of the active site. The molybdenum cofactor biosynthesis protein B stretch occupies residues 156–312 (PRTAILVMSD…FPMLKGDGHA (157 aa)).

The protein in the N-terminal section; belongs to the MoaC family. This sequence in the C-terminal section; belongs to the MoaB/Mog family.

The catalysed reaction is (8S)-3',8-cyclo-7,8-dihydroguanosine 5'-triphosphate = cyclic pyranopterin phosphate + diphosphate. It functions in the pathway cofactor biosynthesis; molybdopterin biosynthesis. Its function is as follows. Catalyzes the conversion of (8S)-3',8-cyclo-7,8-dihydroguanosine 5'-triphosphate to cyclic pyranopterin monophosphate (cPMP). The protein is Molybdenum cofactor biosynthesis bifunctional protein (moaCB) of Chlorobaculum tepidum (strain ATCC 49652 / DSM 12025 / NBRC 103806 / TLS) (Chlorobium tepidum).